The sequence spans 459 residues: Trigger factor (459 aa).

One can recognise a PPIase FKBP-type domain in the interval 161–246 (GDKVVIDFQG…IKKIMEGKLP (86 aa)).

It belongs to the FKBP-type PPIase family. Tig subfamily.

The protein localises to the cytoplasm. It catalyses the reaction [protein]-peptidylproline (omega=180) = [protein]-peptidylproline (omega=0). In terms of biological role, involved in protein export. Acts as a chaperone by maintaining the newly synthesized protein in an open conformation. Functions as a peptidyl-prolyl cis-trans isomerase. This is Trigger factor from Legionella pneumophila (strain Corby).